Here is a 503-residue protein sequence, read N- to C-terminus: MSFELSAPVPLSDNSEAILEKEIGETVKIEGDLVEVYEINRTVDFIKSGNYNSVALQFPDEHLADSGKVASILTNLVEANVQILADTNYGSCCVDEVAAEHMSADAIVHYGRACLSPTSRLPVLYVFGRLPINLHKLEKCLTIPLDQNILLVSDTRWYYAQDSILKSLKTLGYQNVYESHLKERIEPNLEEASTSYTIPGRTYSLPKSLSLQDMTLLYIGPDSPTLSSILMSHYSLVNQFLSFDPLSNKIVEESSFTGAKLRRRYALVQRCRDAGVIGIVIGTLGVHRYLHVLNQLRKMILNAGKKPYMLAVGKLNPAKLANFQEIECFVLIACGENSLIDSKEFYRPIVTPFELVKALSSDMSWNNDFILSFDEVLKLSEGKQSKEPSEVLTEESAEPHFSLITGKFVNSTPMRHLDVTLETADAKNNDSSSASIEKRGMRSLAVNGVYSPAAAFLQSKSWSGLDSVDEGEGPSKLYEGQSGIAKGYVGEGSKEKIQRDFGK.

3 residues coordinate [4Fe-4S] cluster: cysteine 93, cysteine 114, and cysteine 334. The tract at residues glycine 464–lysine 503 is disordered. A compositionally biased stretch (basic and acidic residues) spans glycine 492–lysine 503.

Belongs to the DPH1/DPH2 family. DPH2 subfamily. As to quaternary structure, component of the 2-(3-amino-3-carboxypropyl)histidine synthase complex composed of dph1, dph2, dph3 and a NADH-dependent reductase, predominantly cbr1. [4Fe-4S] cluster serves as cofactor.

It localises to the cytoplasm. It functions in the pathway protein modification; peptidyl-diphthamide biosynthesis. Functionally, required for the first step of diphthamide biosynthesis, a post-translational modification of histidine which occurs in elongation factor 2. Dph1 and dph2 transfer a 3-amino-3-carboxypropyl (ACP) group from S-adenosyl-L-methionine (SAM) to a histidine residue, the reaction is assisted by a reduction system comprising dph3 and a NADH-dependent reductase, predominantly cbr1. Facilitates the reduction of the catalytic iron-sulfur cluster found in the dph1 subunit. This Schizosaccharomyces pombe (strain 972 / ATCC 24843) (Fission yeast) protein is 2-(3-amino-3-carboxypropyl)histidine synthase subunit 2.